We begin with the raw amino-acid sequence, 289 residues long: Homoserine kinase (289 aa).

Residue 79 to 89 coordinates ATP; sequence PLARGLGSSSS.

This sequence belongs to the GHMP kinase family. Homoserine kinase subfamily.

The protein resides in the cytoplasm. It carries out the reaction L-homoserine + ATP = O-phospho-L-homoserine + ADP + H(+). The protein operates within amino-acid biosynthesis; L-threonine biosynthesis; L-threonine from L-aspartate: step 4/5. Catalyzes the ATP-dependent phosphorylation of L-homoserine to L-homoserine phosphate. In Streptococcus pneumoniae serotype 2 (strain D39 / NCTC 7466), this protein is Homoserine kinase.